The primary structure comprises 356 residues: Ribosomal RNA large subunit methyltransferase M (356 aa).

S-adenosyl-L-methionine contacts are provided by residues Ser187, 220-223 (CPGG), Asp239, Asp259, and Asp276. Residue Lys305 is the Proton acceptor of the active site.

The protein belongs to the class I-like SAM-binding methyltransferase superfamily. RNA methyltransferase RlmE family. RlmM subfamily. As to quaternary structure, monomer.

The protein resides in the cytoplasm. The catalysed reaction is cytidine(2498) in 23S rRNA + S-adenosyl-L-methionine = 2'-O-methylcytidine(2498) in 23S rRNA + S-adenosyl-L-homocysteine + H(+). Functionally, catalyzes the 2'-O-methylation at nucleotide C2498 in 23S rRNA. The sequence is that of Ribosomal RNA large subunit methyltransferase M from Pseudoalteromonas atlantica (strain T6c / ATCC BAA-1087).